Consider the following 174-residue polypeptide: Adenylate kinase (174 aa).

The tract at residues S12–V41 is NMP. AMP-binding positions include T13, R18, G39 to V41, G67 to R70, and Q74. Positions G104–D141 are LID. ATP-binding positions include R105 and T114–Y115. Residues R138 and R149 each contribute to the AMP site.

This sequence belongs to the adenylate kinase family. Monomer.

Its subcellular location is the cytoplasm. It catalyses the reaction AMP + ATP = 2 ADP. Its pathway is purine metabolism; AMP biosynthesis via salvage pathway; AMP from ADP: step 1/1. Catalyzes the reversible transfer of the terminal phosphate group between ATP and AMP. Plays an important role in cellular energy homeostasis and in adenine nucleotide metabolism. This Neisseria polysaccharea protein is Adenylate kinase.